Consider the following 154-residue polypeptide: Crossover junction endodeoxyribonuclease RuvC (154 aa).

Residues Asp7, Glu67, and Asp139 contribute to the active site. 3 residues coordinate Mg(2+): Asp7, Glu67, and Asp139.

It belongs to the RuvC family. In terms of assembly, homodimer which binds Holliday junction (HJ) DNA. The HJ becomes 2-fold symmetrical on binding to RuvC with unstacked arms; it has a different conformation from HJ DNA in complex with RuvA. In the full resolvosome a probable DNA-RuvA(4)-RuvB(12)-RuvC(2) complex forms which resolves the HJ. The cofactor is Mg(2+).

Its subcellular location is the cytoplasm. The enzyme catalyses Endonucleolytic cleavage at a junction such as a reciprocal single-stranded crossover between two homologous DNA duplexes (Holliday junction).. The RuvA-RuvB-RuvC complex processes Holliday junction (HJ) DNA during genetic recombination and DNA repair. Endonuclease that resolves HJ intermediates. Cleaves cruciform DNA by making single-stranded nicks across the HJ at symmetrical positions within the homologous arms, yielding a 5'-phosphate and a 3'-hydroxyl group; requires a central core of homology in the junction. The consensus cleavage sequence is 5'-(A/T)TT(C/G)-3'. Cleavage occurs on the 3'-side of the TT dinucleotide at the point of strand exchange. HJ branch migration catalyzed by RuvA-RuvB allows RuvC to scan DNA until it finds its consensus sequence, where it cleaves and resolves the cruciform DNA. The polypeptide is Crossover junction endodeoxyribonuclease RuvC (Prochlorococcus marinus (strain NATL2A)).